An 839-amino-acid chain; its full sequence is A disintegrin and metalloproteinase with thrombospondin motifs 4 (839 aa).

The first 51 residues, 1–51, serve as a signal peptide directing secretion; the sequence is MSHMDSHPGRGLADGWLWGIQPRLLLPTVPVSGSRLVWLLLLASLLPSAWP. Residues 52-212 constitute a propeptide that is removed on maturation; it reads ASPLPREEEI…PSPSPRRAKR (161 aa). Residue N68 is glycosylated (N-linked (GlcNAc...) asparagine). The disordered stretch occupies residues 166–209; sequence EGGAPNSAGGPGAHILRRKSPVSGQGPMCNVKAPPGKPSPSPRR. The Cysteine switch signature appears at 192-199; it reads PMCNVKAP. C194 contacts Zn(2+). A Peptidase M12B domain is found at 218–428; that stretch reads RFVETLVVAD…GFGHCLLDKP (211 aa). 11 disulfides stabilise this stretch: C293–C345, C322–C327, C339–C423, C377–C407, C449–C472, C460–C482, C467–C501, C495–C506, C532–C569, C536–C574, and C547–C559. H361 provides a ligand contact to Zn(2+). E362 is an active-site residue. Residues H365 and H371 each coordinate Zn(2+). The 83-residue stretch at 437-519 folds into the Disintegrin domain; the sequence is TFPGKDYDAD…DQLQAFNVPQ (83 aa). A TSP type-1 domain is found at 520–575; it reads AGGWGPWGSWGDCSRSCGGGVQFSSRDCTRPVPRNGGKYCEGRRTRFRSCNTQDCP. Residues 686 to 839 are spacer; that stretch reads SKQSGSFKKF…LRRRSWAGRK (154 aa).

As to quaternary structure, interacts with SRPX2. Zn(2+) serves as cofactor. In terms of processing, the precursor is cleaved by a furin endopeptidase. Glycosylated. Can be O-fucosylated by POFUT2 on a serine or a threonine residue found within the consensus sequence C1-X(2)-(S/T)-C2-G of the TSP type-1 repeat domains where C1 and C2 are the first and second cysteine residue of the repeat, respectively. Fucosylated repeats can then be further glycosylated by the addition of a beta-1,3-glucose residue by the glucosyltransferase, B3GALTL. Fucosylation mediates the efficient secretion of ADAMTS family members. Can also be C-glycosylated with one or two mannose molecules on tryptophan residues within the consensus sequence W-X-X-W of the TPRs, and N-glycosylated. These other glycosylations can also facilitate secretion.

It localises to the secreted. It is found in the extracellular space. Its subcellular location is the extracellular matrix. The catalysed reaction is Glutamyl endopeptidase. Bonds cleaved include 370-Thr-Glu-Gly-Glu-|-Ala-Arg-Gly-Ser-377 in the interglobular domain of mammalian aggrecan.. Cleaves aggrecan, a cartilage proteoglycan, at the '392-Glu-|-Ala-393' site and may be involved in its turnover. Also cleaves COMP. May play an important role in the destruction of aggrecan in arthritic diseases. The sequence is that of A disintegrin and metalloproteinase with thrombospondin motifs 4 (ADAMTS4) from Bos taurus (Bovine).